Consider the following 178-residue polypeptide: Zinc finger protein ZAT11 (178 aa).

C2H2-type zinc fingers lie at residues 47 to 69 (FECKTCNKRFSSFQALGGHRASH) and 94 to 116 (HKCSICSQSFGTGQALGGHMRRH).

As to expression, expressed in leaves.

It is found in the nucleus. Its function is as follows. Probable transcription factor that may be involved in stress responses. The sequence is that of Zinc finger protein ZAT11 (ZAT11) from Arabidopsis thaliana (Mouse-ear cress).